The chain runs to 393 residues: Elongation factor Tu (393 aa).

Positions 10 to 203 (KPHVNIGTIG…AVDDYIPEPV (194 aa)) constitute a tr-type G domain. The G1 stretch occupies residues 19-26 (GHVDHGKT). 19-26 (GHVDHGKT) is a binding site for GTP. Mg(2+) is bound at residue Thr-26. The segment at 60–64 (GITIS) is G2. The tract at residues 81–84 (DCPG) is G3. GTP contacts are provided by residues 81 to 85 (DCPGH) and 136 to 139 (NKVD). The tract at residues 136-139 (NKVD) is G4. The tract at residues 173 to 175 (SAL) is G5.

This sequence belongs to the TRAFAC class translation factor GTPase superfamily. Classic translation factor GTPase family. EF-Tu/EF-1A subfamily. Monomer.

The protein localises to the cytoplasm. The enzyme catalyses GTP + H2O = GDP + phosphate + H(+). Its function is as follows. GTP hydrolase that promotes the GTP-dependent binding of aminoacyl-tRNA to the A-site of ribosomes during protein biosynthesis. In Chlorobium phaeobacteroides (strain BS1), this protein is Elongation factor Tu.